The following is a 442-amino-acid chain: UDP-N-acetylglucosamine--peptide N-acetylglucosaminyltransferase stabilizing protein GtfB (442 aa).

The protein belongs to the GtfB family. Interacts with glycosyltransferase GtfA (Gtf1). Interacts with glycosyltransferase GtfA; probably forms a heterotetramer with 2 subunits each of GtfA and GtfB. Part of the accessory SecA2/SecY2 protein translocation apparatus.

The protein localises to the cell membrane. It participates in protein modification; protein glycosylation. In terms of biological role, required for the polymorphic O-glycosylation of the serine-rich repeat protein Srr2. A stabilizing protein that is part of the accessory SecA2/SecY2 system specifically required to export serine-rich repeat proteins, probably Srr2 in this organism. The GtfA-GtfB (Gtf1-Gtf2 in this bacteria) complex adds GlcNAc from UDP-GlcNAc to Srr2 substrate, attaching the first sugar residue. Stabilizes the glycosylation activity of GtfA in vivo. Upon expression in a gtfB deletion mutant of S.parasanguis, GtfB confers incorrect glycosylation and partial complementation of a biofilm formation defect, while GtfA/GtfB restores correct expression of serine-rich repeat protein Fap1 and completely restores a biofilm formation defect in a S.parasanguis double gtfA-gtfB deletion. The polypeptide is UDP-N-acetylglucosamine--peptide N-acetylglucosaminyltransferase stabilizing protein GtfB (Streptococcus agalactiae).